Reading from the N-terminus, the 262-residue chain is Plant intracellular Ras-group-related LRR protein 7 (262 aa).

LRR repeat units lie at residues 19-42 (WRSTGIVALRDARLKVVPNEVLQV), 43-66 (GNSLRILDLTNNKIAEIPQEVGTL), 68-89 (NMQRLVLAGNLVESIPANIGYL), 90-112 (RNLKILTLDRNKISVLPEELGSL), 113-135 (SNLQQLSISQNSLSRLPKSVGDL), 137-158 (NMLLLNVSDNKLIALPESIGGC), 159-181 (SSLEELQANGNSIEDVPSSICNL), 182-204 (VCLKSLSLNGNKIRQLPQNLLKD), and 206-231 (KALQNISLHDNPISMDQFQQMDGFTE).

This sequence belongs to the SHOC2 family. In terms of tissue distribution, widely expressed and preferentially in leaf sheathes.

Its function is as follows. Leucine-rich repeat protein that likely mediates protein interactions, possibly in the context of signal transduction. This is Plant intracellular Ras-group-related LRR protein 7 (IRL7) from Oryza sativa subsp. japonica (Rice).